Here is a 1044-residue protein sequence, read N- to C-terminus: Isoleucine--tRNA ligase (1044 aa).

A 'HIGH' region motif is present at residues 48-58 (PFATGLPHFGH). Positions 594–598 (KMSKS) match the 'KMSKS' region motif. An ATP-binding site is contributed by lysine 597.

This sequence belongs to the class-I aminoacyl-tRNA synthetase family. IleS type 2 subfamily. Monomer. Zn(2+) serves as cofactor.

The protein localises to the cytoplasm. The enzyme catalyses tRNA(Ile) + L-isoleucine + ATP = L-isoleucyl-tRNA(Ile) + AMP + diphosphate. Its function is as follows. Catalyzes the attachment of isoleucine to tRNA(Ile). As IleRS can inadvertently accommodate and process structurally similar amino acids such as valine, to avoid such errors it has two additional distinct tRNA(Ile)-dependent editing activities. One activity is designated as 'pretransfer' editing and involves the hydrolysis of activated Val-AMP. The other activity is designated 'posttransfer' editing and involves deacylation of mischarged Val-tRNA(Ile). The polypeptide is Isoleucine--tRNA ligase (Borrelia turicatae (strain 91E135)).